The chain runs to 282 residues: Energy-coupling factor transporter ATP-binding protein EcfA1 (282 aa).

Residues isoleucine 6 to aspartate 243 enclose the ABC transporter domain. Residue glycine 40 to serine 47 participates in ATP binding.

This sequence belongs to the ABC transporter superfamily. Energy-coupling factor EcfA family. Forms a stable energy-coupling factor (ECF) transporter complex composed of 2 membrane-embedded substrate-binding proteins (S component), 2 ATP-binding proteins (A component) and 2 transmembrane proteins (T component).

It localises to the cell membrane. In terms of biological role, ATP-binding (A) component of a common energy-coupling factor (ECF) ABC-transporter complex. Unlike classic ABC transporters this ECF transporter provides the energy necessary to transport a number of different substrates. This chain is Energy-coupling factor transporter ATP-binding protein EcfA1, found in Lactobacillus delbrueckii subsp. bulgaricus (strain ATCC 11842 / DSM 20081 / BCRC 10696 / JCM 1002 / NBRC 13953 / NCIMB 11778 / NCTC 12712 / WDCM 00102 / Lb 14).